The sequence spans 383 residues: Lipid-A-disaccharide synthase (383 aa).

The protein belongs to the LpxB family.

The catalysed reaction is 2-N,3-O-bis[(3R)-3-hydroxytetradecanoyl]-alpha-D-glucosaminyl 1-phosphate + UDP-2-N,3-O-bis[(3R)-3-hydroxytetradecanoyl]-alpha-D-glucosamine = lipid A disaccharide (E. coli) + UDP + H(+). The enzyme catalyses a lipid X + a UDP-2-N,3-O-bis[(3R)-3-hydroxyacyl]-alpha-D-glucosamine = a lipid A disaccharide + UDP + H(+). It functions in the pathway glycolipid biosynthesis; lipid IV(A) biosynthesis; lipid IV(A) from (3R)-3-hydroxytetradecanoyl-[acyl-carrier-protein] and UDP-N-acetyl-alpha-D-glucosamine: step 5/6. Its function is as follows. Condensation of UDP-2,3-diacylglucosamine and 2,3-diacylglucosamine-1-phosphate to form lipid A disaccharide, a precursor of lipid A, a phosphorylated glycolipid that anchors the lipopolysaccharide to the outer membrane of the cell. This chain is Lipid-A-disaccharide synthase, found in Klebsiella pneumoniae (strain 342).